A 25-amino-acid polypeptide reads, in one-letter code: ADPTFGFTPLGLSEKANLQIMKAYD.

As to quaternary structure, heterodimer of a 27 kDa subunit and a 17 kDa subunit; disulfide-linked. SBTX is known to be glycosylated but it is not known which one of its two subunits is modified; contains 5% carbohydrates. In terms of tissue distribution, expressed in seeds, leaves, roots and stem (at protein level).

In terms of biological role, involved in plant defense. Inhibits spore germination in C.sojina, A.niger (at concentrations &gt;50 ug/ml) and P.herguei but not in F.oxysporum and F.solani. Does not inhibit vegetative mycelial growth. Inhibits growth of C.albicans and K.marxiannus but not P.membranifaciens or C.parapsilosis. Probably acts by affecting the cell membrane. Does not have urease, chitinase, beta-1,3-glucanase or hemagglutination activities. Does not inhibit trypsin. Injection into mice produces toxic effects such as dyspnea, tonic-clonic convulsion and death. In Glycine max (Soybean), this protein is Soybean toxin 27 kDa chain.